Consider the following 226-residue polypeptide: Cobalt transport protein CbiM 2 (226 aa).

Transmembrane regions (helical) follow at residues 6–26 (GFLP…VVAY), 43–63 (MLLG…MPSV), 75–95 (LGAI…VLLF), 107–127 (TLGA…AAVF), 135–155 (FPFG…TYVT), and 181–201 (VFAL…VVVM).

This sequence belongs to the CbiM family. As to quaternary structure, forms an energy-coupling factor (ECF) transporter complex composed of an ATP-binding protein (A component, CbiO), a transmembrane protein (T component, CbiQ) and 2 possible substrate-capture proteins (S components, CbiM and CbiN) of unknown stoichimetry.

The protein resides in the cell inner membrane. The protein operates within cofactor biosynthesis; adenosylcobalamin biosynthesis. Its function is as follows. Part of the energy-coupling factor (ECF) transporter complex CbiMNOQ involved in cobalt import. The polypeptide is Cobalt transport protein CbiM 2 (Pelobacter propionicus (strain DSM 2379 / NBRC 103807 / OttBd1)).